The sequence spans 452 residues: General transcription and DNA repair factor IIH subunit TFB2 (452 aa).

Belongs to the TFB2 family. In terms of assembly, component of the 7-subunit TFIIH core complex composed of XPB, XPD, TFB1/GTF2H1, GTF2H2/P44, TFB4/GTF2H3, TFB2/GTF2H4 and TFB5/GTF2H5, which is active in NER. The core complex associates with the 3-subunit CDK-activating kinase (CAK) module composed of CYCH1/cyclin H1, CDKD and MAT1/At4g30820 to form the 10-subunit holoenzyme (holo-TFIIH) active in transcription.

It localises to the nucleus. In terms of biological role, component of the general transcription and DNA repair factor IIH (TFIIH) core complex, which is involved in general and transcription-coupled nucleotide excision repair (NER) of damaged DNA and, when complexed to CAK, in RNA transcription by RNA polymerase II. In NER, TFIIH acts by opening DNA around the lesion to allow the excision of the damaged oligonucleotide and its replacement by a new DNA fragment. In transcription, TFIIH has an essential role in transcription initiation. When the pre-initiation complex (PIC) has been established, TFIIH is required for promoter opening and promoter escape. Phosphorylation of the C-terminal tail (CTD) of the largest subunit of RNA polymerase II by the kinase module CAK controls the initiation of transcription. The sequence is that of General transcription and DNA repair factor IIH subunit TFB2 from Arabidopsis thaliana (Mouse-ear cress).